The following is a 237-amino-acid chain: Ribonuclease 3 (237 aa).

In terms of domain architecture, RNase III spans 4–133 (LTELEKSLGV…VLAAIYLDKG (130 aa)). Glu46 contacts Mg(2+). Catalysis depends on residues Asp50 and Glu122. Glu122 lines the Mg(2+) pocket. The DRBM domain occupies 160–229 (DYKSRLQELV…AKEALQQFEN (70 aa)).

Belongs to the ribonuclease III family. In terms of assembly, homodimer. The cofactor is Mg(2+).

Its subcellular location is the cytoplasm. The catalysed reaction is Endonucleolytic cleavage to 5'-phosphomonoester.. Its function is as follows. Digests double-stranded RNA. Involved in the processing of primary rRNA transcript to yield the immediate precursors to the large and small rRNAs (23S and 16S). Processes some mRNAs, and tRNAs when they are encoded in the rRNA operon. Processes pre-crRNA and tracrRNA of type II CRISPR loci if present in the organism. The protein is Ribonuclease 3 of Dehalococcoides mccartyi (strain ATCC BAA-2266 / KCTC 15142 / 195) (Dehalococcoides ethenogenes (strain 195)).